The chain runs to 87 residues: MIYLDEFTGMEVSIVDSPNRSEIGRTGLVSFETKNTLEIDTGRKRIMIPKHLRKFRINGQFVDGDLINMRPEDRLREYRRILRDLRR.

The protein belongs to the eukaryotic/archaeal RNase P protein component 1 family. As to quaternary structure, consists of a catalytic RNA component and at least 4-5 protein subunits.

The protein localises to the cytoplasm. The enzyme catalyses Endonucleolytic cleavage of RNA, removing 5'-extranucleotides from tRNA precursor.. Its function is as follows. Part of ribonuclease P, a protein complex that generates mature tRNA molecules by cleaving their 5'-ends. This chain is Ribonuclease P protein component 1, found in Thermoplasma acidophilum (strain ATCC 25905 / DSM 1728 / JCM 9062 / NBRC 15155 / AMRC-C165).